Reading from the N-terminus, the 124-residue chain is Small ribosomal subunit protein bS16 (124 aa).

The segment at 88 to 124 (VPEQTKQAQPKAKAQERLREAEEKARAAAEAAASAEG) is disordered. Positions 100-114 (KAQERLREAEEKARA) are enriched in basic and acidic residues. Low complexity predominate over residues 115–124 (AAEAAASAEG).

Belongs to the bacterial ribosomal protein bS16 family.

The chain is Small ribosomal subunit protein bS16 from Rhodospirillum rubrum (strain ATCC 11170 / ATH 1.1.1 / DSM 467 / LMG 4362 / NCIMB 8255 / S1).